Here is a 441-residue protein sequence, read N- to C-terminus: Zinc finger and BTB domain-containing protein 26 (441 aa).

In terms of domain architecture, BTB spans 33-97 (CDVTVLIDDI…CYSGVLEFPE (65 aa)). Residues 134 to 177 (DSKEGCEPQSASPQSKEQQGDARGSPKQDSPCIHPSEDSMDMED) are disordered. Residue Lys-184 forms a Glycyl lysine isopeptide (Lys-Gly) (interchain with G-Cter in SUMO2) linkage. The interval 194 to 216 (VRSKKDQNQFISSEPTALHSSEP) is disordered. Over residues 201–216 (NQFISSEPTALHSSEP) the composition is skewed to polar residues. Lys-255 participates in a covalent cross-link: Glycyl lysine isopeptide (Lys-Gly) (interchain with G-Cter in SUMO2). C2H2-type zinc fingers lie at residues 273-295 (HQCP…LKMH), 298-320 (FMCL…MRVH), 326-348 (FQCK…LNLH), and 354-377 (HKCN…KQLH). A Glycyl lysine isopeptide (Lys-Gly) (interchain with G-Cter in SUMO2) cross-link involves residue Lys-329.

As to expression, ubiquitous.

Its subcellular location is the nucleus. In terms of biological role, may be involved in transcriptional regulation. The chain is Zinc finger and BTB domain-containing protein 26 (ZBTB26) from Homo sapiens (Human).